Reading from the N-terminus, the 374-residue chain is 5-methylthioribulose-1-phosphate isomerase (374 aa).

It belongs to the RuBisCO large chain family. Type IV subfamily.

The enzyme catalyses 5-(methylsulfanyl)-D-ribulose 1-phosphate = S-methyl-1-thio-D-xylulose 5-phosphate. It carries out the reaction 5-(methylsulfanyl)-D-ribulose 1-phosphate = 1-(methylsulfanyl)ribulose 5-phosphate. It functions in the pathway amino-acid biosynthesis; L-methionine biosynthesis via salvage pathway. Its pathway is metabolic intermediate biosynthesis; 1-deoxy-D-xylulose 5-phosphate biosynthesis. Catalyzes the conversion of 5-methylthio-D-ribulose 1-phosphate (MTRu-1P) to a 3:1 mixture of 1-methylthioxylulose 5-phosphate (MTXu-5P) and 1-methylthioribulose 5-phosphate (MTRu-5P). Involved in the MTA-isoprenoid shunt of the methionine salvage pathway. The sequence is that of 5-methylthioribulose-1-phosphate isomerase from Rhodospirillum rubrum (strain ATCC 11170 / ATH 1.1.1 / DSM 467 / LMG 4362 / NCIMB 8255 / S1).